The chain runs to 282 residues: MRHGTLRVDVVTIFPEYLEPLNVSLVGKARARGQLNVHVHDLREWTYDRHNTVDDTPYGGGPGMVMKTEPWGDALDSVLADGYETDAHGPALIVPTPSGRPFTQELAVELSERPWLVFTPARYEGIDRRVIDEYATRMPVYEVSIGDYVLAGGEAAVLVITEAVARLLPGVLGNAESHRDDSFAPGAMANLLEGPVYTKPPAWRDREIPEVLLSGHHGRIARWRRDEALKRTTANRPDLIERCDPSAFDKKDREMLSILGWFPDPDGVPHGRFWRRPEAMEE.

145–150 (IGDYVL) lines the S-adenosyl-L-methionine pocket.

This sequence belongs to the RNA methyltransferase TrmD family. In terms of assembly, homodimer.

It is found in the cytoplasm. The enzyme catalyses guanosine(37) in tRNA + S-adenosyl-L-methionine = N(1)-methylguanosine(37) in tRNA + S-adenosyl-L-homocysteine + H(+). Its function is as follows. Specifically methylates guanosine-37 in various tRNAs. The chain is tRNA (guanine-N(1)-)-methyltransferase from Streptomyces avermitilis (strain ATCC 31267 / DSM 46492 / JCM 5070 / NBRC 14893 / NCIMB 12804 / NRRL 8165 / MA-4680).